The sequence spans 397 residues: 1-deoxy-D-xylulose 5-phosphate reductoisomerase (397 aa).

6 residues coordinate NADPH: Thr17, Gly18, Ser19, Ile20, Asn47, and Asn130. Lys131 is a 1-deoxy-D-xylulose 5-phosphate binding site. Glu132 contacts NADPH. Mn(2+) is bound at residue Asp156. 4 residues coordinate 1-deoxy-D-xylulose 5-phosphate: Ser157, Glu158, Ser182, and His205. Glu158 is a binding site for Mn(2+). Residue Gly211 participates in NADPH binding. Residues Ser218, Asn223, Lys224, and Glu227 each contribute to the 1-deoxy-D-xylulose 5-phosphate site. Glu227 is a binding site for Mn(2+).

This sequence belongs to the DXR family. The cofactor is Mg(2+). It depends on Mn(2+) as a cofactor.

It carries out the reaction 2-C-methyl-D-erythritol 4-phosphate + NADP(+) = 1-deoxy-D-xylulose 5-phosphate + NADPH + H(+). The protein operates within isoprenoid biosynthesis; isopentenyl diphosphate biosynthesis via DXP pathway; isopentenyl diphosphate from 1-deoxy-D-xylulose 5-phosphate: step 1/6. Catalyzes the NADPH-dependent rearrangement and reduction of 1-deoxy-D-xylulose-5-phosphate (DXP) to 2-C-methyl-D-erythritol 4-phosphate (MEP). In Allorhizobium ampelinum (strain ATCC BAA-846 / DSM 112012 / S4) (Agrobacterium vitis (strain S4)), this protein is 1-deoxy-D-xylulose 5-phosphate reductoisomerase.